The primary structure comprises 489 residues: Pup--protein ligase (489 aa).

Residue Glu25 coordinates Mg(2+). Residue Arg69 participates in ATP binding. A Mg(2+)-binding site is contributed by Tyr71. Asp73 acts as the Proton acceptor in catalysis. Glu79 provides a ligand contact to Mg(2+). Positions 82 and 447 each coordinate ATP.

This sequence belongs to the Pup ligase/Pup deamidase family. Pup-conjugating enzyme subfamily.

The catalysed reaction is ATP + [prokaryotic ubiquitin-like protein]-L-glutamate + [protein]-L-lysine = ADP + phosphate + N(6)-([prokaryotic ubiquitin-like protein]-gamma-L-glutamyl)-[protein]-L-lysine.. The protein operates within protein degradation; proteasomal Pup-dependent pathway. It participates in protein modification; protein pupylation. Catalyzes the covalent attachment of the prokaryotic ubiquitin-like protein modifier Pup to the proteasomal substrate proteins, thereby targeting them for proteasomal degradation. This tagging system is termed pupylation. The ligation reaction involves the side-chain carboxylate of the C-terminal glutamate of Pup and the side-chain amino group of a substrate lysine. In Corynebacterium efficiens (strain DSM 44549 / YS-314 / AJ 12310 / JCM 11189 / NBRC 100395), this protein is Pup--protein ligase.